The following is a 185-amino-acid chain: Ribosome-recycling factor (185 aa).

This sequence belongs to the RRF family.

It is found in the cytoplasm. Responsible for the release of ribosomes from messenger RNA at the termination of protein biosynthesis. May increase the efficiency of translation by recycling ribosomes from one round of translation to another. This Listeria innocua serovar 6a (strain ATCC BAA-680 / CLIP 11262) protein is Ribosome-recycling factor.